Consider the following 119-residue polypeptide: MKLLALLCILIWLSQPGLNRPLSIFYTKQNLPRTYTPPVRELEYWCTYGKHCDFCWECRNGICKNKVWDDMPLIKQNDYISQCSIARYFDRCMYFIKPKSPYIHYMDCSQPIVYKGFSH.

Positions 1 to 16 are cleaved as a signal peptide; the sequence is MKLLALLCILIWLSQP.

Belongs to the asfivirus MGF 110 family.

In Ornithodoros (relapsing fever ticks), this protein is Protein MGF 110-13L-B.